The primary structure comprises 85 residues: Protein RnfH (85 aa).

The protein belongs to the UPF0125 (RnfH) family.

The sequence is that of Protein RnfH from Cereibacter sphaeroides (strain ATCC 17023 / DSM 158 / JCM 6121 / CCUG 31486 / LMG 2827 / NBRC 12203 / NCIMB 8253 / ATH 2.4.1.) (Rhodobacter sphaeroides).